The primary structure comprises 560 residues: Arginine--tRNA ligase (560 aa).

Residues F164 to D174 carry the 'HIGH' region motif.

The protein belongs to the class-I aminoacyl-tRNA synthetase family. As to quaternary structure, monomer.

Its subcellular location is the cytoplasm. It carries out the reaction tRNA(Arg) + L-arginine + ATP = L-arginyl-tRNA(Arg) + AMP + diphosphate. This Bordetella pertussis (strain Tohama I / ATCC BAA-589 / NCTC 13251) protein is Arginine--tRNA ligase.